The following is a 232-amino-acid chain: Ras association domain-containing protein 3 (232 aa).

Position 2 is an N-acetylserine (serine 2). The segment at 25-46 (RAPPGKSRSGQPDVEKEKETHN) is disordered. Positions 37–46 (DVEKEKETHN) are enriched in basic and acidic residues. Positions 78 to 180 (YTGFIKVQME…TLSFVLREHE (103 aa)) constitute a Ras-associating domain. Residues 181–228 (IGEWEAFSLPELQNFLRILDKEEDEQLQSLKRRYTAYRQKLEEALGEV) form the SARAH domain.

The protein resides in the cytoplasm. It localises to the cytoskeleton. This Mus musculus (Mouse) protein is Ras association domain-containing protein 3 (Rassf3).